The sequence spans 660 residues: Bifunctional polymyxin resistance protein ArnA (660 aa).

The segment at Met-1–Leu-304 is formyltransferase ArnAFT. Residue His-104 is the Proton donor; for formyltransferase activity of the active site. (6R)-10-formyltetrahydrofolate contacts are provided by residues Arg-114 and Val-136–Asp-140. Positions Arg-314–Ser-660 are dehydrogenase ArnADH. NAD(+)-binding positions include Asp-347 and Asp-368–Ile-369. UDP-alpha-D-glucuronate-binding positions include Ala-393, Tyr-398, and Thr-432–Ser-433. Glu-434 functions as the Proton acceptor; for decarboxylase activity in the catalytic mechanism. UDP-alpha-D-glucuronate contacts are provided by residues Arg-460, Asn-492, Lys-526 to Arg-535, and Tyr-613. The active-site Proton donor; for decarboxylase activity is Arg-619.

The protein in the N-terminal section; belongs to the Fmt family. UDP-L-Ara4N formyltransferase subfamily. In the C-terminal section; belongs to the NAD(P)-dependent epimerase/dehydratase family. UDP-glucuronic acid decarboxylase subfamily. Homohexamer, formed by a dimer of trimers.

It catalyses the reaction UDP-alpha-D-glucuronate + NAD(+) = UDP-beta-L-threo-pentopyranos-4-ulose + CO2 + NADH. It carries out the reaction UDP-4-amino-4-deoxy-beta-L-arabinose + (6R)-10-formyltetrahydrofolate = UDP-4-deoxy-4-formamido-beta-L-arabinose + (6S)-5,6,7,8-tetrahydrofolate + H(+). Its pathway is nucleotide-sugar biosynthesis; UDP-4-deoxy-4-formamido-beta-L-arabinose biosynthesis; UDP-4-deoxy-4-formamido-beta-L-arabinose from UDP-alpha-D-glucuronate: step 1/3. It functions in the pathway nucleotide-sugar biosynthesis; UDP-4-deoxy-4-formamido-beta-L-arabinose biosynthesis; UDP-4-deoxy-4-formamido-beta-L-arabinose from UDP-alpha-D-glucuronate: step 3/3. The protein operates within bacterial outer membrane biogenesis; lipopolysaccharide biosynthesis. In terms of biological role, bifunctional enzyme that catalyzes the oxidative decarboxylation of UDP-glucuronic acid (UDP-GlcUA) to UDP-4-keto-arabinose (UDP-Ara4O) and the addition of a formyl group to UDP-4-amino-4-deoxy-L-arabinose (UDP-L-Ara4N) to form UDP-L-4-formamido-arabinose (UDP-L-Ara4FN). The modified arabinose is attached to lipid A and is required for resistance to polymyxin and cationic antimicrobial peptides. This Salmonella heidelberg (strain SL476) protein is Bifunctional polymyxin resistance protein ArnA.